The primary structure comprises 211 residues: uncharacterized protein (211 aa).

The N-terminal stretch at 1 to 27 is a signal peptide; it reads MKRTSAALVVFLILLFLGLLFLPMFIV.

This is an uncharacterized protein from Archaeoglobus fulgidus (strain ATCC 49558 / DSM 4304 / JCM 9628 / NBRC 100126 / VC-16).